Reading from the N-terminus, the 497-residue chain is 4,4'-diaponeurosporene oxygenase (497 aa).

7–19 (VIGGGLGGISAAI) provides a ligand contact to FAD.

The protein belongs to the carotenoid/retinoid oxidoreductase family. CrtP subfamily. It depends on FAD as a cofactor.

It carries out the reaction all-trans-4,4'-diaponeurosporene + 2 AH2 + 2 O2 = 4,4'-diaponeurosporenal + 2 A + 3 H2O. It participates in carotenoid biosynthesis; staphyloxanthin biosynthesis; staphyloxanthin from farnesyl diphosphate: step 3/5. In terms of biological role, involved in the biosynthesis of the yellow-orange carotenoid staphyloxanthin, which plays a role in the virulence via its protective function against oxidative stress. Catalyzes the oxidation of the terminal methyl side group of 4,4'-diaponeurosporene to form 4,4'-diaponeurosporen-4-al. The sequence is that of 4,4'-diaponeurosporene oxygenase from Staphylococcus aureus (strain MSSA476).